The chain runs to 522 residues: Bifunctional purine biosynthesis protein PurH (522 aa).

In terms of domain architecture, MGS-like spans 1 to 143 (MIRRALISVS…KNHARVAVVV (143 aa)).

Belongs to the PurH family.

The enzyme catalyses (6R)-10-formyltetrahydrofolate + 5-amino-1-(5-phospho-beta-D-ribosyl)imidazole-4-carboxamide = 5-formamido-1-(5-phospho-D-ribosyl)imidazole-4-carboxamide + (6S)-5,6,7,8-tetrahydrofolate. The catalysed reaction is IMP + H2O = 5-formamido-1-(5-phospho-D-ribosyl)imidazole-4-carboxamide. Its pathway is purine metabolism; IMP biosynthesis via de novo pathway; 5-formamido-1-(5-phospho-D-ribosyl)imidazole-4-carboxamide from 5-amino-1-(5-phospho-D-ribosyl)imidazole-4-carboxamide (10-formyl THF route): step 1/1. The protein operates within purine metabolism; IMP biosynthesis via de novo pathway; IMP from 5-formamido-1-(5-phospho-D-ribosyl)imidazole-4-carboxamide: step 1/1. The protein is Bifunctional purine biosynthesis protein PurH of Sorangium cellulosum (strain So ce56) (Polyangium cellulosum (strain So ce56)).